We begin with the raw amino-acid sequence, 122 residues long: Secretion system apparatus protein SsaM (122 aa).

This chain is Secretion system apparatus protein SsaM (ssaM), found in Salmonella typhimurium (strain LT2 / SGSC1412 / ATCC 700720).